Here is a 532-residue protein sequence, read N- to C-terminus: Cytokinin dehydrogenase 8 (532 aa).

Positions 1-26 (MELKAMYLYAAVLAVLLCSSVNFIQS) are cleaved as a signal peptide. Residues 51–238 (VSDAPFAVMR…TRARIPLQLA (188 aa)) enclose the FAD-binding PCMH-type domain. FAD is bound by residues Ala-87, Gly-89, and Gly-91. His-92 is subject to Pros-8alpha-FAD histidine. Ser-93, Gln-97, Asp-162, Thr-167, Ser-173, Ile-177, and Ile-228 together coordinate FAD. The N-linked (GlcNAc...) asparagine glycan is linked to Asn-420. 2 residues coordinate FAD: Tyr-482 and Gln-520.

Belongs to the oxygen-dependent FAD-linked oxidoreductase family. As to quaternary structure, monomer. It depends on FAD as a cofactor.

The protein localises to the secreted. Its subcellular location is the extracellular space. It catalyses the reaction N(6)-dimethylallyladenine + A + H2O = 3-methyl-2-butenal + adenine + AH2. Its function is as follows. Catalyzes the oxidation of cytokinins, a family of N(6)-substituted adenine derivatives that are plant hormones, where the substituent is an isopentenyl group. The protein is Cytokinin dehydrogenase 8 (CKX8) of Oryza sativa subsp. indica (Rice).